The sequence spans 150 residues: Plasmin C (150 aa).

Positions 1–14 (MRSFFLLCALVAVC) are cleaved as a signal peptide.

The chain is Plasmin C (PLSC) from Physarum polycephalum (Slime mold).